A 485-amino-acid chain; its full sequence is Glutamyl-tRNA(Gln) amidotransferase subunit A (485 aa).

Residues lysine 78 and serine 153 each act as charge relay system in the active site. Serine 177 serves as the catalytic Acyl-ester intermediate.

Belongs to the amidase family. GatA subfamily. Heterotrimer of A, B and C subunits.

The catalysed reaction is L-glutamyl-tRNA(Gln) + L-glutamine + ATP + H2O = L-glutaminyl-tRNA(Gln) + L-glutamate + ADP + phosphate + H(+). In terms of biological role, allows the formation of correctly charged Gln-tRNA(Gln) through the transamidation of misacylated Glu-tRNA(Gln) in organisms which lack glutaminyl-tRNA synthetase. The reaction takes place in the presence of glutamine and ATP through an activated gamma-phospho-Glu-tRNA(Gln). The chain is Glutamyl-tRNA(Gln) amidotransferase subunit A from Lawsonia intracellularis (strain PHE/MN1-00).